A 399-amino-acid polypeptide reads, in one-letter code: Adenylate cyclase (399 aa).

Polar residues predominate over residues methionine 1–serine 10. The tract at residues methionine 1–threonine 35 is disordered. Residues proline 24–glutamate 33 are compositionally biased toward basic and acidic residues. A Guanylate cyclase domain is found at arginine 198–threonine 307. Residues aspartate 203 and aspartate 247 each contribute to the Mg(2+) site.

It belongs to the adenylyl cyclase class-3 family. Mg(2+) is required as a cofactor.

It catalyses the reaction ATP = 3',5'-cyclic AMP + diphosphate. The protein is Adenylate cyclase (cya) of Streptomyces griseus.